The sequence spans 176 residues: Endoribonuclease YbeY (176 aa).

Zn(2+) is bound by residues His-138, His-142, and His-148.

It belongs to the endoribonuclease YbeY family. Zn(2+) is required as a cofactor.

It localises to the cytoplasm. In terms of biological role, single strand-specific metallo-endoribonuclease involved in late-stage 70S ribosome quality control and in maturation of the 3' terminus of the 16S rRNA. In Trichormus variabilis (strain ATCC 29413 / PCC 7937) (Anabaena variabilis), this protein is Endoribonuclease YbeY.